We begin with the raw amino-acid sequence, 468 residues long: ATP synthase subunit beta 1 (468 aa).

Position 151–158 (Gly151–Thr158) interacts with ATP.

It belongs to the ATPase alpha/beta chains family. F-type ATPases have 2 components, CF(1) - the catalytic core - and CF(0) - the membrane proton channel. CF(1) has five subunits: alpha(3), beta(3), gamma(1), delta(1), epsilon(1). CF(0) has three main subunits: a(1), b(2) and c(9-12). The alpha and beta chains form an alternating ring which encloses part of the gamma chain. CF(1) is attached to CF(0) by a central stalk formed by the gamma and epsilon chains, while a peripheral stalk is formed by the delta and b chains.

It is found in the cell inner membrane. It catalyses the reaction ATP + H2O + 4 H(+)(in) = ADP + phosphate + 5 H(+)(out). Produces ATP from ADP in the presence of a proton gradient across the membrane. The catalytic sites are hosted primarily by the beta subunits. In Photobacterium profundum (strain SS9), this protein is ATP synthase subunit beta 1.